A 969-amino-acid polypeptide reads, in one-letter code: Translation initiation factor IF-2 (969 aa).

Residues 50–370 form a disordered region; that stretch reads SFASKSAPAN…QAPSVGGVRL (321 aa). A compositionally biased stretch (low complexity) spans 54 to 76; sequence KSAPANGAKPGPAASARPGAKPT. Pro residues predominate over residues 77–87; the sequence is PGGPRPGPRTP. Over residues 88 to 102 the composition is skewed to low complexity; it reads APAASAPQAPAEQTA. Residues 112-124 are compositionally biased toward pro residues; it reads AVKPGPAPTPARP. Residues 125–164 are compositionally biased toward low complexity; that stretch reads AAPEAPAAKAAPEAPAQRPTPGGPRPGQQQQRPGAPAQGG. Residues 240–267 are compositionally biased toward pro residues; it reads PGGPRPSPGSMPPRPNPGAMPQRTPRPG. The segment covering 269 to 340 has biased composition (gly residues); the sequence is SAGGRPGRPG…GAAGAFGRPG (72 aa). The segment covering 344 to 353 has biased composition (basic residues); that stretch reads RRGRKSKRQK. The tr-type G domain occupies 465 to 636; sequence VRPPVVTVMG…AVLLTADAAL (172 aa). A G1 region spans residues 474 to 481; that stretch reads GHVDHGKT. 474 to 481 contributes to the GTP binding site; it reads GHVDHGKT. A G2 region spans residues 499–503; the sequence is GITQH. A G3 region spans residues 524–527; that stretch reads DTPG. GTP is bound by residues 524–528 and 578–581; these read DTPGH and NKID. The G4 stretch occupies residues 578-581; it reads NKID. The tract at residues 614 to 616 is G5; the sequence is SAK.

Belongs to the TRAFAC class translation factor GTPase superfamily. Classic translation factor GTPase family. IF-2 subfamily.

Its subcellular location is the cytoplasm. One of the essential components for the initiation of protein synthesis. Protects formylmethionyl-tRNA from spontaneous hydrolysis and promotes its binding to the 30S ribosomal subunits. Also involved in the hydrolysis of GTP during the formation of the 70S ribosomal complex. This is Translation initiation factor IF-2 from Nocardia farcinica (strain IFM 10152).